A 188-amino-acid polypeptide reads, in one-letter code: Shikimate kinase (188 aa).

21–26 serves as a coordination point for ATP; that stretch reads GAGKTT. Thr25 is a Mg(2+) binding site. Residues Asp43, Arg67, and Gly90 each coordinate substrate. Residue Arg130 participates in ATP binding. Arg148 contributes to the substrate binding site.

The protein belongs to the shikimate kinase family. In terms of assembly, monomer. It depends on Mg(2+) as a cofactor.

It localises to the cytoplasm. It catalyses the reaction shikimate + ATP = 3-phosphoshikimate + ADP + H(+). It participates in metabolic intermediate biosynthesis; chorismate biosynthesis; chorismate from D-erythrose 4-phosphate and phosphoenolpyruvate: step 5/7. Its function is as follows. Catalyzes the specific phosphorylation of the 3-hydroxyl group of shikimic acid using ATP as a cosubstrate. The sequence is that of Shikimate kinase from Geobacillus kaustophilus (strain HTA426).